Reading from the N-terminus, the 175-residue chain is uncharacterized protein (175 aa).

Disordered regions lie at residues Asn68–Tyr112 and Pro153–Thr175. Residues Asp94 to Pro105 are compositionally biased toward low complexity.

Belongs to the asfivirus H171R family.

The protein resides in the virion. This is an uncharacterized protein from African swine fever virus (isolate Tick/Malawi/Lil 20-1/1983) (ASFV).